Here is a 373-residue protein sequence, read N- to C-terminus: MKLKSGSMVKIRNKINDIEPYVPGRSIKEIADAYGLKEDEIIKLGSNENPLGPSPAAVEAMERELESVHRYPESALTDLREAIADYAGVGMDQVIVGGDGADEIIDVLGRTFLEPGESFVVPMPSYMYYEYTLQAHDARAVHARWDVNENRLDLESVLDAVDESTRLVFLCTPNNPTGGLIDKKDIRAVLESTDTLVVVDEAYTEFAGVDNTDLLPDHENLFILRTFSKVMGLAGMRIGYGLGDPQIIEYMHRVKPVFSLTRLSHAAALATIRDRDYIKKSTEYSIKSREYLYSGLKKFPELRVFRSYANYILIDVRGTGRTAAELSEELLRKGIIVRDCTSFTGLDEYWIRVSVGTLEEDRRFLEVLGELVQ.

Lys-229 bears the N6-(pyridoxal phosphate)lysine mark.

Belongs to the class-II pyridoxal-phosphate-dependent aminotransferase family. Histidinol-phosphate aminotransferase subfamily. The cofactor is pyridoxal 5'-phosphate.

The catalysed reaction is L-histidinol phosphate + 2-oxoglutarate = 3-(imidazol-4-yl)-2-oxopropyl phosphate + L-glutamate. It functions in the pathway amino-acid biosynthesis; L-histidine biosynthesis; L-histidine from 5-phospho-alpha-D-ribose 1-diphosphate: step 7/9. The sequence is that of Histidinol-phosphate aminotransferase (hisC) from Methanothermobacter thermautotrophicus (strain ATCC 29096 / DSM 1053 / JCM 10044 / NBRC 100330 / Delta H) (Methanobacterium thermoautotrophicum).